The chain runs to 149 residues: Large ribosomal subunit protein bL9 (149 aa).

Belongs to the bacterial ribosomal protein bL9 family.

Binds to the 23S rRNA. This is Large ribosomal subunit protein bL9 from Pasteurella multocida (strain Pm70).